The following is a 519-amino-acid chain: Maltose/maltodextrin transport system permease protein MalF (519 aa).

At 1-18 (MRKNPMDVIKKKHWWQSD) the chain is on the cytoplasmic side. A helical membrane pass occupies residues 19-41 (ALKWSVLGLLGLLVGYLVVLMYA). Residues 42-44 (QGE) lie on the Periplasmic side of the membrane. A helical membrane pass occupies residues 45–62 (YLFAITTLILSSAGLYIF). The Cytoplasmic portion of the chain corresponds to 63-74 (ANRKAYAWRYVY). The chain crosses the membrane as a helical span at residues 75–97 (PGMAGMGLFVLFPLVCTIAIAFT). At 98 to 288 (NYSSTNQLTF…QKPFLAIFVW (191 aa)) the chain is on the periplasmic side. The 225-residue stretch at 286–510 (FVWTVVFSLI…LLVGALAIVN (225 aa)) folds into the ABC transmembrane type-1 domain. The helical transmembrane segment at 289 to 311 (TVVFSLITVFLTVAVGMVLACLV) threads the bilayer. Over 312 to 323 (QWEALRGKAVYR) the chain is Cytoplasmic. Residues 324-346 (VLLILPYAVPSFISILIFKGLFN) form a helical membrane-spanning segment. Over 347–374 (QSFGEINMMLSALFGVKPAWFSDPTTAR) the chain is Periplasmic. A helical membrane pass occupies residues 375–397 (TMLIIVNTWLGYPYMMILCMGLL). The Cytoplasmic segment spans residues 398–417 (KAIPDDLYEASAMDGAGPFQ). Residues 418-440 (NFFKITLPLLIKPLTPLMIASFA) traverse the membrane as a helical segment. At 441-488 (FNFNNFVLIQLLTNGGPDRLGTTTPAGYTDLLVNYTYRIAFEGGGGQD) the chain is on the periplasmic side. A helical membrane pass occupies residues 489 to 511 (FGLAAAIATLIFLLVGALAIVNL). The Cytoplasmic segment spans residues 512–519 (KATRMKFD).

The protein belongs to the binding-protein-dependent transport system permease family. MalFG subfamily. The complex is composed of two ATP-binding proteins (MalK), two transmembrane proteins (MalG and MalF) and a solute-binding protein (MalE).

It localises to the cell inner membrane. In terms of biological role, part of the ABC transporter complex MalEFGK involved in maltose/maltodextrin import. Probably responsible for the translocation of the substrate across the membrane. This chain is Maltose/maltodextrin transport system permease protein MalF (malF), found in Escherichia coli O6:H1 (strain CFT073 / ATCC 700928 / UPEC).